Reading from the N-terminus, the 453-residue chain is Aldehyde dehydrogenase, dimeric NADP-preferring (453 aa).

N-acetylserine is present on Ser2. Residue Lys178 is modified to N6-acetyllysine. Residue 188-193 (GSTAVG) coordinates NAD(+). N6-acetyllysine is present on Lys194. Residues Glu210 and Cys244 contribute to the active site.

It belongs to the aldehyde dehydrogenase family. Homodimer. Constitutively expressed in cornea, stomach, skin, bladder and lungs. Lowest expression levels in lungs and bladder.

It is found in the cytoplasm. The enzyme catalyses an aldehyde + NAD(+) + H2O = a carboxylate + NADH + 2 H(+). The catalysed reaction is octanal + NAD(+) + H2O = octanoate + NADH + 2 H(+). ALDHs play a major role in the detoxification of alcohol-derived acetaldehyde. They are involved in the metabolism of corticosteroids, biogenic amines, neurotransmitters, and lipid peroxidation. Oxidizes medium and long chain aldehydes into non-toxic fatty acids. Preferentially oxidizes aromatic aldehyde substrates. Comprises about 50 percent of corneal epithelial soluble proteins. May play a role in preventing corneal damage caused by ultraviolet light. In Mus musculus (Mouse), this protein is Aldehyde dehydrogenase, dimeric NADP-preferring (Aldh3a1).